The following is a 773-amino-acid chain: MLNGRLPLLRLGICRNMLSRPRLAKLPSIRFRSLVTPSSSQLIPLSRLCLRSPAVGKSLILQSFRCNSSKTVPETSLPSASPISKGSARSAHAKEQSKTDDYKDIIRLFMLAKRDWKLLLTAILLLTISCSIGMSIPKVIGIVLDTLKTSSGSDFFDLKIPIFSLPLYEFLSFFTVALLIGCAANFGRFILLRILSERVVARLRANVIKKTLHQDAEFFDNHKVGDLISRLGSDAYVVSRSMTQKVSDGVKALICGVVGVGMMCSLSPQLSILLLFFTPPVLFSASVFGKQIRNTSKDLQEATGQLTRVAEEQLSGIKTVQSFVAEGNELSRYNVAIRDIFQVGKTAAFTNAKFFTTTSLLGDLSFLTVLAYGSYLVLQSQLSIGDLTAFMLYTEYTGNAVFGLSTFYSEIMQGAGAASRLFELTDRKPSISPTVGHKYKPDRGVIEFKDVSFSYPTRPSVQIFKNLNFKIAPGSSVCIVGPSGRGKSTIALLLLRYYNPTTGTITIDNQDISKLNCKSLRRHIGIVQQEPVLMSGTIRDNITYGLTYTPTKEEIRSVAKQCFCHNFITKFPNTYDTVIGPHGTLLSGGQKQRIAIARALIKKPTILILDEATSALDVESEGAINYTFGQLMKSKSMTIVSIAHRLSTIRRSENVIVLGHDGSVVEMGKFKELYANPTSALSQLLNEKAAPGPSDQQLQIEKVIEKEDLNESKEHDDQKKDDNDDNDNNHDNDSNNQSPETKDNNSDDIEKSVEHLLKDAAKEANPIKITPQP.

The transit peptide at 1–90 (MLNGRLPLLR…SPISKGSARS (90 aa)) directs the protein to the mitochondrion. A compositionally biased stretch (polar residues) spans 73–84 (PETSLPSASPIS). The tract at residues 73–95 (PETSLPSASPISKGSARSAHAKE) is disordered. An ABC transmembrane type-1 domain is found at 119–413 (LLTAILLLTI…LSTFYSEIMQ (295 aa)). Transmembrane regions (helical) follow at residues 123–143 (ILLL…IGIV), 170–192 (FLSF…FILL), and 257–277 (VVGV…LLFF). 481–488 (GPSGRGKS) is a binding site for ATP. Residues 493–733 (LLLRYYNPTT…DDNDNNHDND (241 aa)) enclose the ABC transporter domain. Composition is skewed to basic and acidic residues over residues 706–733 (KEDL…HDND) and 740–762 (ETKD…DAAK). The segment at 706–773 (KEDLNESKEH…ANPIKITPQP (68 aa)) is disordered.

The protein belongs to the ABC transporter superfamily. ABCB family. Mitochondrial peptide exporter (TC 3.A.1.212) subfamily.

The protein localises to the mitochondrion inner membrane. This Saccharomyces cerevisiae (strain ATCC 204508 / S288c) (Baker's yeast) protein is ATP-dependent permease MDL2, mitochondrial (MDL2).